Consider the following 265-residue polypeptide: Hydroxyethylthiazole kinase (265 aa).

A substrate-binding site is contributed by methionine 50. 2 residues coordinate ATP: arginine 125 and threonine 171. A substrate-binding site is contributed by glycine 198.

The protein belongs to the Thz kinase family. The cofactor is Mg(2+).

The catalysed reaction is 5-(2-hydroxyethyl)-4-methylthiazole + ATP = 4-methyl-5-(2-phosphooxyethyl)-thiazole + ADP + H(+). The protein operates within cofactor biosynthesis; thiamine diphosphate biosynthesis; 4-methyl-5-(2-phosphoethyl)-thiazole from 5-(2-hydroxyethyl)-4-methylthiazole: step 1/1. Functionally, catalyzes the phosphorylation of the hydroxyl group of 4-methyl-5-beta-hydroxyethylthiazole (THZ). This is Hydroxyethylthiazole kinase from Salmonella arizonae (strain ATCC BAA-731 / CDC346-86 / RSK2980).